Consider the following 173-residue polypeptide: Peptide deformylase (173 aa).

Residues Cys91 and His133 each coordinate Fe cation. Glu134 is a catalytic residue. His137 contributes to the Fe cation binding site.

It belongs to the polypeptide deformylase family. Requires Fe(2+) as cofactor.

The enzyme catalyses N-terminal N-formyl-L-methionyl-[peptide] + H2O = N-terminal L-methionyl-[peptide] + formate. Removes the formyl group from the N-terminal Met of newly synthesized proteins. Requires at least a dipeptide for an efficient rate of reaction. N-terminal L-methionine is a prerequisite for activity but the enzyme has broad specificity at other positions. The sequence is that of Peptide deformylase from Buchnera aphidicola subsp. Acyrthosiphon pisum (strain 5A).